The primary structure comprises 458 residues: Argininosuccinate lyase (458 aa).

This sequence belongs to the lyase 1 family. Argininosuccinate lyase subfamily.

Its subcellular location is the cytoplasm. It catalyses the reaction 2-(N(omega)-L-arginino)succinate = fumarate + L-arginine. Its pathway is amino-acid biosynthesis; L-arginine biosynthesis; L-arginine from L-ornithine and carbamoyl phosphate: step 3/3. The sequence is that of Argininosuccinate lyase from Actinobacillus pleuropneumoniae serotype 5b (strain L20).